A 340-amino-acid polypeptide reads, in one-letter code: Outer membrane protein U (340 aa).

Positions 1 to 21 (MKKTLIALSVSAAAVATGVNA) are cleaved as a signal peptide.

This sequence belongs to the Gram-negative porin family. Homotrimer.

Its subcellular location is the cell outer membrane. In terms of biological role, forms pores that allow passive diffusion of small molecules across the outer membrane. The protein is Outer membrane protein U (ompU) of Vibrio vulnificus (strain CMCP6).